The following is a 1091-amino-acid chain: Ninein homolog (1091 aa).

Positions 1-361 (MEVSADPYEQ…AVEVDERHAS (361 aa)) are sufficient for binding to microtubules. 4 disordered regions span residues 100–216 (YIES…TTSP), 456–483 (AQTS…KEEE), 525–602 (KAKK…EELT), and 616–639 (KAAK…SLEQ). Phosphoserine occurs at positions 103, 107, 108, 113, and 141. The residue at position 144 (threonine 144) is a Phosphothreonine. A compositionally biased stretch (polar residues) spans 168–177 (VQRSSSQSDL). Residues 487-526 (LMEKLAALQMENAQLRDKTDELTIEIESLNVELIRSKTKA) are sufficient for interaction with ens. 2 stretches are compositionally biased toward basic and acidic residues: residues 527–537 (KKQEKQEKQED) and 547–563 (RRGD…ESPR). Serine 594 carries the phosphoserine modification. The span at 616–634 (KAAKEGRSLTPESRSKELE) shows a compositional bias: basic and acidic residues. Phosphoserine occurs at positions 701 and 714. Positions 799-919 (AKSLADSKDE…TSCLSHEKCS (121 aa)) are disordered. The span at 822 to 845 (SHKTASRNNLTTSETSIFSTTPFE) shows a compositional bias: polar residues. Residues 846-860 (SSQSGPSPTNSGNSN) are compositionally biased toward low complexity. The span at 894–913 (ETSSTASGKSFESNSKTSCL) shows a compositional bias: polar residues.

As to quaternary structure, interacts with ens.

It is found in the cytoplasm. The protein resides in the cytoskeleton. The protein localises to the microtubule organizing center. Its subcellular location is the centrosome. It localises to the perinuclear region. Functionally, required for the positioning and anchorage of the microtubule minus-ends in various cells. In fat body cells, part of perinuclear non-centrosomal microtubule-organizing centers (ncMTOCs) which function to accommodate the organization of microtubule (MT) networks to control nuclear positioning and dynein motor-based retrograde endosomal trafficking. Within the ncMTOCs, Msp300 and shot anchors the ncMTOC at the nuclear surface and recruits the MT minus-end regulators Patronin and Nin for assembly, anchoring and/or stabilization of circumferential and radial MTs at the ncMTOC. This protein may also function with Patronin to recruit msps to the ncMTOC for the gamma-tubulin-independent elongation of radial MTs. In embryonic myotubes and larval myofibers, functions with ens to regulate myonuclear positioning and, as a consequence, is involved in muscle development. Likely functions by positively regulating ens. Essential for embryogenesis, likely by contributing to accurate chromosome segregation during early embryonic nuclear divisions. However, other reports found that it is not essential for embryogenesis or embryonic cellular divisions. The sequence is that of Ninein homolog from Drosophila melanogaster (Fruit fly).